The primary structure comprises 149 residues: Transcriptional repressor NrdR (149 aa).

A zinc finger lies at 3–34; sequence CPFCATDDTKVVDSRLTADGYQIRRRRECPVC. In terms of domain architecture, ATP-cone spans 49–139; it reads PHIVKNNGSR…VYLSFDDVEE (91 aa).

This sequence belongs to the NrdR family. Requires Zn(2+) as cofactor.

Its function is as follows. Negatively regulates transcription of bacterial ribonucleotide reductase nrd genes and operons by binding to NrdR-boxes. This Glaesserella parasuis serovar 5 (strain SH0165) (Haemophilus parasuis) protein is Transcriptional repressor NrdR.